The primary structure comprises 253 residues: Transcription factor ORG2 (253 aa).

The 53-residue stretch at 71–123 (VKKLNHNASERDRRKKINTLFSSLRSCLPASDQSKKLSIPETVSKSLKYIPEL) folds into the bHLH domain.

In terms of assembly, homodimer. As to expression, roots.

The protein localises to the nucleus. This is Transcription factor ORG2 (ORG2) from Arabidopsis thaliana (Mouse-ear cress).